A 213-amino-acid polypeptide reads, in one-letter code: Heat shock protein 27 (213 aa).

S58 and S75 each carry phosphoserine. The sHSP domain occupies 71 to 182 (SRRASGGPNA…SERIVQIQQT (112 aa)). Residues 157-213 (VLTLKAPPPPSKEQAKSERIVQIQQTGPAHLSVKAPAPEAGDGKAENGSGEKMETSK) are disordered. Over residues 197–213 (GDGKAENGSGEKMETSK) the composition is skewed to basic and acidic residues.

It belongs to the small heat shock protein (HSP20) family.

This chain is Heat shock protein 27 (Hsp27), found in Drosophila melanogaster (Fruit fly).